We begin with the raw amino-acid sequence, 449 residues long: Putative cytochrome P450 135A1 (449 aa).

Residue C383 coordinates heme.

Belongs to the cytochrome P450 family. The cofactor is heme.

This Mycobacterium tuberculosis (strain CDC 1551 / Oshkosh) protein is Putative cytochrome P450 135A1 (cyp135A1).